A 228-amino-acid chain; its full sequence is Ribosomal RNA small subunit methyltransferase G (228 aa).

Residues Gly-70, 121–122 (AE), and Arg-138 each bind S-adenosyl-L-methionine.

It belongs to the methyltransferase superfamily. RNA methyltransferase RsmG family.

Its subcellular location is the cytoplasm. Functionally, specifically methylates the N7 position of a guanine in 16S rRNA. The protein is Ribosomal RNA small subunit methyltransferase G of Thermotoga sp. (strain RQ2).